We begin with the raw amino-acid sequence, 339 residues long: Terpene synthase 7 (339 aa).

The short motif at 79–84 is the DDxx(x)D/E motif element; that stretch reads DDFLES. The NDxxSxxxD/E motif motif lies at 219 to 227; that stretch reads NDCASYAKE.

It belongs to the terpene synthase family.

It catalyses the reaction (2E,6E)-farnesyl diphosphate = (-)-beta-barbatene + diphosphate. Terpene synthase that converts its substrate farnesyl diphosphate (FPP) into the sesquiterpene beta-barbatene. The polypeptide is Terpene synthase 7 (Dictyostelium discoideum (Social amoeba)).